A 935-amino-acid chain; its full sequence is Lon protease homolog 2, peroxisomal (935 aa).

The Lon N-terminal domain occupies 12–296 (LPVHRLERNL…NLRRLVEEMG (285 aa)). 452–459 (GPPGVGKT) lines the ATP pocket. The Lon proteolytic domain occupies 692–922 (QKGYGVVNGL…SDVLASVWEG (231 aa)). Active-site residues include Ser-789 and Lys-832. The short motif at 933-935 (ARI) is the Microbody targeting signal element.

It belongs to the peptidase S16 family.

The protein localises to the peroxisome matrix. It catalyses the reaction Hydrolysis of proteins in presence of ATP.. ATP-dependent serine protease that mediates the selective degradation of misfolded and unassembled polypeptides in the peroxisomal matrix. Necessary for type 2 peroxisome targeting signal (PTS2)-containing protein processing and facilitates peroxisome matrix protein import. This chain is Lon protease homolog 2, peroxisomal (PLN), found in Pichia angusta (Yeast).